Here is a 309-residue protein sequence, read N- to C-terminus: Tagatose-6-phosphate kinase (309 aa).

The protein belongs to the carbohydrate kinase PfkB family. LacC subfamily.

The enzyme catalyses D-tagatofuranose 6-phosphate + ATP = D-tagatofuranose 1,6-bisphosphate + ADP + H(+). It functions in the pathway carbohydrate metabolism; D-tagatose 6-phosphate degradation; D-glyceraldehyde 3-phosphate and glycerone phosphate from D-tagatose 6-phosphate: step 1/2. In Streptococcus pyogenes serotype M18 (strain MGAS8232), this protein is Tagatose-6-phosphate kinase.